Reading from the N-terminus, the 385-residue chain is Deoxyguanosinetriphosphate triphosphohydrolase-like protein (385 aa).

The HD domain occupies 62–197; that stretch reads RLTHSLEVAQ…VSLADDIAYS (136 aa).

The protein belongs to the dGTPase family. Type 2 subfamily.

The protein is Deoxyguanosinetriphosphate triphosphohydrolase-like protein of Neorickettsia sennetsu (strain ATCC VR-367 / Miyayama) (Ehrlichia sennetsu).